Consider the following 475-residue polypeptide: Cobyric acid synthase (475 aa).

Positions 244 to 431 (KLNVVVPVLT…LHGFFDEADV (188 aa)) constitute a GATase cobBQ-type domain. The active-site Nucleophile is the Cys325. His423 is a catalytic residue.

This sequence belongs to the CobB/CobQ family. CobQ subfamily.

It functions in the pathway cofactor biosynthesis; adenosylcobalamin biosynthesis. Its function is as follows. Catalyzes amidations at positions B, D, E, and G on adenosylcobyrinic A,C-diamide. NH(2) groups are provided by glutamine, and one molecule of ATP is hydrogenolyzed for each amidation. The chain is Cobyric acid synthase from Vibrio campbellii (strain ATCC BAA-1116).